Reading from the N-terminus, the 566-residue chain is Tetratricopeptide repeat protein 34 (566 aa).

A disordered region spans residues 1–29 (MLQRSPRAGPSRAQGRREAAETGGPTTQE). TPR repeat units lie at residues 50–83 (EASR…RPQA), 178–211 (SESL…EPGN), 212–245 (VQAL…GPGT), 306–339 (PHWH…APTS), 341–373 (AARA…DAPD), 424–457 (ACHL…ALGD), 464–497 (AEDF…APSL), and 512–545 (ARMF…DPDH).

This Homo sapiens (Human) protein is Tetratricopeptide repeat protein 34 (TTC34).